The sequence spans 92 residues: Small ribosomal subunit protein uS19 (92 aa).

It belongs to the universal ribosomal protein uS19 family.

In terms of biological role, protein S19 forms a complex with S13 that binds strongly to the 16S ribosomal RNA. This is Small ribosomal subunit protein uS19 from Rhodospirillum centenum (strain ATCC 51521 / SW).